The sequence spans 690 residues: MPRVHAIEDYRNFGIMAHIDAGKTTTTERILFYTGKSHKIGEVHEGAATMDWMTQEQERGITITSAATTAFWNGKRLNIIDTPGHVDFTIEVERSLRVLDGAVCVLDSNQGVEPQTETVWRQGDKYKVPRIVFANKMDKTGADFFKCLQDIVDRLGAKPVAIQLPIGSENNFKGVIDLVRMKAVVWNDESLGAKFEDAEIPAELLDQAKEYREKMIEAAVELDDDAMSAYLEGNEPDEATLKRLIRKAVLTGAFYPVLCGSAFKNKGVQPLLDAVVDYLPSPLDVPAIKGTDDKGNEVVRKADDKEPLSLLAFKIMDDPFVGTITFCRIYSGVLLSGTGVVNSTREKKERIGRMLLMHANNREDIKEAYAGDIVALAGLKEARTGDTLCDPANPVILEKMEFPEPVIEIAIEPKSKADQEKLGVALAKLAAEDPSFRVSTDLESGQTILKGMGELHLDIKVDILKRTYKVDANIGAPQVAFRERITKKAEVDYTHKKQTGGTGQFAAVSFVVEPNEPGGGYVFESKIVGGAVPKEYIPGVEKGIESVLSSGVVAGFPVVDVKVTLVDGKYHDVDSSALAFEIASRAAFREALQKGKSVLLEPIMKVEVVTPEDYTGSVIGDLNSRRGQIQGQDMRGNANVINAMVPLMNMFGYVNNLRSMSQGRANFTMQFDHYAEAPANVSAEVQKKFA.

The 276-residue stretch at 8 to 283 folds into the tr-type G domain; the sequence is EDYRNFGIMA…AVVDYLPSPL (276 aa). Residues 17–24, 81–85, and 135–138 contribute to the GTP site; these read AHIDAGKT, DTPGH, and NKMD.

The protein belongs to the TRAFAC class translation factor GTPase superfamily. Classic translation factor GTPase family. EF-G/EF-2 subfamily.

The protein localises to the cytoplasm. Catalyzes the GTP-dependent ribosomal translocation step during translation elongation. During this step, the ribosome changes from the pre-translocational (PRE) to the post-translocational (POST) state as the newly formed A-site-bound peptidyl-tRNA and P-site-bound deacylated tRNA move to the P and E sites, respectively. Catalyzes the coordinated movement of the two tRNA molecules, the mRNA and conformational changes in the ribosome. The protein is Elongation factor G of Rhodopseudomonas palustris (strain ATCC BAA-98 / CGA009).